The sequence spans 99 residues: Putative septation protein SpoVG (99 aa).

It belongs to the SpoVG family.

Functionally, could be involved in septation. The polypeptide is Putative septation protein SpoVG (Exiguobacterium sp. (strain ATCC BAA-1283 / AT1b)).